The following is a 253-amino-acid chain: Protein C1orf43 homolog (253 aa).

A helical transmembrane segment spans residues 11–31; it reads VNVVLVMAYGSLVFVLLFIFV.

Its subcellular location is the membrane. The protein localises to the golgi apparatus. It is found in the mitochondrion. Functionally, general regulator of phagocytosis. Required to uptake Gram negative bacterium by macrophages. In Mus musculus (Mouse), this protein is Protein C1orf43 homolog.